A 244-amino-acid chain; its full sequence is Mannose-binding protein C (244 aa).

Residues 1–18 (MSIFTSFLLLCVVTVVYA) form the signal peptide. In terms of domain architecture, Collagen-like spans 38–96 (GLNGFPGKDGRDGAKGEKGEPGQGLRGLQGPPGKVGPTGPPGNPGLKGAVGPKGDRGDR). The tract at residues 40–101 (NGFPGKDGRD…DRGDRAEFDT (62 aa)) is disordered. At proline 43 the chain carries 4-hydroxyproline. The segment covering 45–57 (KDGRDGAKGEKGE) has biased composition (basic and acidic residues). 4 positions are modified to 4-hydroxyproline: proline 58, proline 69, proline 78, and proline 81. The span at 65–74 (LQGPPGKVGP) shows a compositional bias: low complexity. A compositionally biased stretch (basic and acidic residues) spans 90 to 99 (KGDRGDRAEF). The stretch at 108–126 (IAALRSELRALRNWVLFSL) forms a coiled coil. The 113-residue stretch at 129–241 (KVGKKYFVSS…CSDSFLAICE (113 aa)) folds into the C-type lectin domain. 2 disulfides stabilise this stretch: cysteine 151-cysteine 240 and cysteine 218-cysteine 232. Asparagine 210 is a glycosylation site (N-linked (GlcNAc...) asparagine).

In terms of assembly, oligomeric complex of 3 or more homotrimers. Interacts with MASP1 and MASP2. Interacts with MEP1A and MEP1B and may inhibit their catalytic activity. Post-translationally, hydroxylation on proline residues within the sequence motif, GXPG, is most likely to be 4-hydroxy as this fits the requirement for 4-hydroxylation in vertebrates.

It localises to the secreted. Functionally, calcium-dependent lectin involved in innate immune defense. Binds mannose, fucose and N-acetylglucosamine on different microorganisms and activates the lectin complement pathway. Binds to late apoptotic cells, as well as to apoptotic blebs and to necrotic cells, but not to early apoptotic cells, facilitating their uptake by macrophages. This Mus musculus (Mouse) protein is Mannose-binding protein C (Mbl2).